The sequence spans 236 residues: Leucyl/phenylalanyl-tRNA--protein transferase (236 aa).

The protein belongs to the L/F-transferase family.

The protein localises to the cytoplasm. The enzyme catalyses N-terminal L-lysyl-[protein] + L-leucyl-tRNA(Leu) = N-terminal L-leucyl-L-lysyl-[protein] + tRNA(Leu) + H(+). It catalyses the reaction N-terminal L-arginyl-[protein] + L-leucyl-tRNA(Leu) = N-terminal L-leucyl-L-arginyl-[protein] + tRNA(Leu) + H(+). The catalysed reaction is L-phenylalanyl-tRNA(Phe) + an N-terminal L-alpha-aminoacyl-[protein] = an N-terminal L-phenylalanyl-L-alpha-aminoacyl-[protein] + tRNA(Phe). Functionally, functions in the N-end rule pathway of protein degradation where it conjugates Leu, Phe and, less efficiently, Met from aminoacyl-tRNAs to the N-termini of proteins containing an N-terminal arginine or lysine. The polypeptide is Leucyl/phenylalanyl-tRNA--protein transferase (Nitrosomonas europaea (strain ATCC 19718 / CIP 103999 / KCTC 2705 / NBRC 14298)).